A 424-amino-acid chain; its full sequence is MTRFDSIERAVADIAAGKAVVVVDDEDRENEGDLIFAAEKATPELVAFMVRYTSGYLCVPLDGDDCDRLGLPPMYATNQDKHGTAYTVTVDAREGIGTGISASDRAATMRLLANPESGANDFTRPGHVVPLRAKEGGVLRRPGHTEAAVDLARMADLRPAGVICEIVSQKDEGAMAQTDELRVFADEHNLALISIADLIAWRRKHEKHVLRIAEARIPTRHGEFTAVGYTSIYDEVEHVALVRGDIAGPDGDGSDVLVRVHSECLTGDVFGSLRCDCGPQLDAALDMVAQEGRGVVLYMRGHEGRGIGLMHKLQAYQLQDAGSDTVDANLELGLPADARDYGIGAQILVDLGISSMRLLTNNPAKRVGLDGYGLQITDRVPMPLRANAENLTYLRTKRDRMGHDLIGLDEYEANQNTAQPGTAL.

A DHBP synthase region spans residues 1–204 (MTRFDSIERA…IADLIAWRRK (204 aa)). D-ribulose 5-phosphate contacts are provided by residues 28-29 (RE), Asp-33, 141-145 (RPGHT), and Glu-165. Glu-29 serves as a coordination point for Mg(2+). His-144 contacts Mg(2+). Positions 205-424 (HEKHVLRIAE…QNTAQPGTAL (220 aa)) are GTP cyclohydrolase II. 259-263 (RVHSE) contributes to the GTP binding site. Zn(2+)-binding residues include Cys-264, Cys-275, and Cys-277. Residues Gln-280, 303 to 305 (EGR), and Thr-325 each bind GTP. The active-site Proton acceptor; for GTP cyclohydrolase activity is Asp-337. Residue Arg-339 is the Nucleophile; for GTP cyclohydrolase activity of the active site. GTP contacts are provided by Thr-360 and Lys-365.

In the N-terminal section; belongs to the DHBP synthase family. The protein in the C-terminal section; belongs to the GTP cyclohydrolase II family. Requires Mg(2+) as cofactor. It depends on Mn(2+) as a cofactor. Zn(2+) is required as a cofactor.

The catalysed reaction is D-ribulose 5-phosphate = (2S)-2-hydroxy-3-oxobutyl phosphate + formate + H(+). It carries out the reaction GTP + 4 H2O = 2,5-diamino-6-hydroxy-4-(5-phosphoribosylamino)-pyrimidine + formate + 2 phosphate + 3 H(+). The protein operates within cofactor biosynthesis; riboflavin biosynthesis; 2-hydroxy-3-oxobutyl phosphate from D-ribulose 5-phosphate: step 1/1. It participates in cofactor biosynthesis; riboflavin biosynthesis; 5-amino-6-(D-ribitylamino)uracil from GTP: step 1/4. Functionally, catalyzes the conversion of D-ribulose 5-phosphate to formate and 3,4-dihydroxy-2-butanone 4-phosphate. In terms of biological role, catalyzes the conversion of GTP to 2,5-diamino-6-ribosylamino-4(3H)-pyrimidinone 5'-phosphate (DARP), formate and pyrophosphate. The sequence is that of Riboflavin biosynthesis protein RibBA from Rhodococcus erythropolis (strain PR4 / NBRC 100887).